Here is a 287-residue protein sequence, read N- to C-terminus: Telomere repeat-binding factor 5 (287 aa).

Residues Met-1–Thr-62 enclose the HTH myb-type domain. The H-T-H motif DNA-binding region spans Trp-28–Val-58. The interval Val-58 to Leu-107 is disordered. A compositionally biased stretch (pro residues) spans Arg-93–Gly-103. The H15 domain occupies Asn-119–Asp-193. A coiled-coil region spans residues Ala-233–Lys-259.

Belongs to the histone H1/H5 family. SMH subfamily.

It localises to the nucleus. The protein localises to the chromosome. Functionally, binds preferentially double-stranded telomeric repeats. This Arabidopsis thaliana (Mouse-ear cress) protein is Telomere repeat-binding factor 5.